We begin with the raw amino-acid sequence, 564 residues long: Probable metalloprotease ARX1 (564 aa).

Belongs to the peptidase M24 family. As to quaternary structure, component of the nucleoplasmic and cytoplasmic pre-60S ribosomal particles.

It is found in the cytoplasm. It localises to the nucleus. In terms of biological role, probable metalloprotease involved in proper assembly of pre-ribosomal particles during the biogenesis of the 60S ribosomal subunit. Accompanies the pre-60S particles to the cytoplasm. The sequence is that of Probable metalloprotease ARX1 (ARX1) from Candida albicans (strain SC5314 / ATCC MYA-2876) (Yeast).